The chain runs to 556 residues: Formate--tetrahydrofolate ligase (556 aa).

65–72 (TPAGEGKT) is an ATP binding site.

This sequence belongs to the formate--tetrahydrofolate ligase family.

The enzyme catalyses (6S)-5,6,7,8-tetrahydrofolate + formate + ATP = (6R)-10-formyltetrahydrofolate + ADP + phosphate. It functions in the pathway one-carbon metabolism; tetrahydrofolate interconversion. This is Formate--tetrahydrofolate ligase from Peptoclostridium acidaminophilum (Eubacterium acidaminophilum).